Here is a 458-residue protein sequence, read N- to C-terminus: Tyrosine phenol-lyase (458 aa).

The residue at position 258 (K258) is an N6-(pyridoxal phosphate)lysine.

It belongs to the beta-eliminating lyase family. In terms of assembly, homotetramer. Requires pyridoxal 5'-phosphate as cofactor.

The catalysed reaction is L-tyrosine + H2O = phenol + pyruvate + NH4(+). The protein is Tyrosine phenol-lyase (tpl) of Symbiobacterium sp. (strain SC-1).